Here is a 214-residue protein sequence, read N- to C-terminus: Melanoregulin (214 aa).

The Cholesterol-binding sequence motif motif lies at 162–172 (LSERYLFVVDR). Serine 213 bears the Phosphoserine mark.

The protein belongs to the melanoregulin family. As to quaternary structure, identified in a complex with RILP and DCTN1; interacts directly with RILP, but does not interact directly with DCTN1. Interacts with PRPH2. In terms of processing, palmitoylated. Palmitoylation is required to maintain the protein at the melanosome membrane. In terms of tissue distribution, expressed in photoreceptor cells (at protein level).

Its subcellular location is the apical cell membrane. It is found in the melanosome membrane. The protein resides in the lysosome membrane. It localises to the cytoplasmic vesicle membrane. Probably functions as a cargo-recognition protein that couples cytoplasmic vesicles to the transport machinery. Plays a role in hair pigmentation, a process that involves shedding of melanosome-containing vesicles from melanocytes, followed by phagocytosis of the melanosome-containing vesicles by keratinocytes. Functions on melanosomes as receptor for RILP and the complex formed by RILP and DCTN1, and thereby contributes to retrograde melanosome transport from the cell periphery to the center. Overexpression causes accumulation of late endosomes and/or lysosomes at the microtubule organising center (MTOC) at the center of the cell. Probably binds cholesterol and requires the presence of cholesterol in membranes to function in microtubule-mediated retrograde organelle transport. Binds phosphatidylinositol 3-phosphate, phosphatidylinositol 4-phosphate, phosphatidylinositol 5-phosphate and phosphatidylinositol 3,5-bisphosphate, but not phosphatidylinositol 3,4-bisphosphate or phosphatidylinositol 4,5-bisphosphate. Required for normal phagosome clearing and normal activation of lysosomal enzymes in lysosomes from retinal pigment epithelium cells. Required for normal degradation of the lipofuscin component N-retinylidene-N-retinylethanolamine (A2E) in the eye. May function in membrane fusion and regulate the biogenesis of disk membranes of photoreceptor rod cells. The protein is Melanoregulin (MREG) of Homo sapiens (Human).